A 1046-amino-acid polypeptide reads, in one-letter code: Translation initiation factor IF-2 (1046 aa).

Positions 49–448 (EAFPAEGSAP…MGAMVPRGNG (400 aa)) are disordered. Residues 52–71 (PAEGSAPSSRPGGRPGNGAR) show a composition bias toward low complexity. Residues 94-111 (RPGPGGRPVPGRPGPAPL) are compositionally biased toward pro residues. Low complexity-rich tracts occupy residues 112–139 (PGAS…SQPV) and 147–159 (PRPA…AAAP). The span at 160–176 (APAPSAPAPAPSAPAPA) shows a compositional bias: pro residues. A compositionally biased stretch (low complexity) spans 177–187 (PITSAPTAATP). A compositionally biased stretch (pro residues) spans 188–206 (PAAPQRPTPGGPRPGPAAP). Over residues 210 to 222 (RTGGPGGPGGPGG) the composition is skewed to gly residues. The span at 223 to 235 (GPRPGPRPGPRPA) shows a compositional bias: pro residues. Residues 244–253 (SPAAGPRAAS) show a composition bias toward low complexity. Composition is skewed to pro residues over residues 260-281 (SAPP…PRPG) and 304-314 (RPTPGQMPPRP). A compositionally biased stretch (low complexity) spans 320 to 333 (PRPNSNMFQPRPAG). Over residues 334–414 (GAPGRPGGGG…AGAFGPGGRG (81 aa)) the composition is skewed to gly residues. Residues 415–426 (RPGRQRKSKRAK) are compositionally biased toward basic residues. Residues 539 to 711 (ARPPVVTVMG…VILTADASLD (173 aa)) enclose the tr-type G domain. The tract at residues 548 to 555 (GHVDHGKT) is G1. A GTP-binding site is contributed by 548–555 (GHVDHGKT). The G2 stretch occupies residues 573–577 (GITQH). Residues 598 to 601 (DTPG) are G3. Residues 598–602 (DTPGH) and 652–655 (NKVD) contribute to the GTP site. The G4 stretch occupies residues 652-655 (NKVD). The tract at residues 688–690 (SAR) is G5.

The protein belongs to the TRAFAC class translation factor GTPase superfamily. Classic translation factor GTPase family. IF-2 subfamily.

The protein localises to the cytoplasm. Functionally, one of the essential components for the initiation of protein synthesis. Protects formylmethionyl-tRNA from spontaneous hydrolysis and promotes its binding to the 30S ribosomal subunits. Also involved in the hydrolysis of GTP during the formation of the 70S ribosomal complex. This chain is Translation initiation factor IF-2, found in Parafrankia sp. (strain EAN1pec).